Consider the following 375-residue polypeptide: ATP-dependent kinase YFH7 (375 aa).

66–74 provides a ligand contact to ATP; the sequence is GPPGSGKST.

The protein belongs to the YFH7 family.

Functionally, ATP-dependent kinase that could be involved in endoplasmic reticulum membrane assembly. The chain is ATP-dependent kinase YFH7 (YFH7) from Zygosaccharomyces rouxii (strain ATCC 2623 / CBS 732 / NBRC 1130 / NCYC 568 / NRRL Y-229).